Reading from the N-terminus, the 360-residue chain is Aspartate beta-hydroxylase domain-containing protein 1 (360 aa).

Residues 1–45 (MWKGGNQEAVIEGSGGELGVPGSWGLQDAACHLARASLPIMFPWP) lie on the Cytoplasmic side of the membrane. Residues 46–68 (LPLGSSALTMLLGALTSLFLWYC) form a helical membrane-spanning segment. The Lumenal portion of the chain corresponds to 69–360 (YRLGSQDMQA…ALDFVFAPDP (292 aa)).

This sequence belongs to the aspartyl/asparaginyl beta-hydroxylase family.

It localises to the membrane. This chain is Aspartate beta-hydroxylase domain-containing protein 1 (Asphd1), found in Mus musculus (Mouse).